The chain runs to 172 residues: Allergen Bos d 2 (172 aa).

The N-terminal stretch at Met1–Ala16 is a signal peptide. Gln17 is modified (pyrrolidone carboxylic acid). Cystine bridges form between Cys60–Cys64 and Cys79–Cys170.

This sequence belongs to the calycin superfamily. Lipocalin family. In terms of tissue distribution, found exclusively in skin. Produced in sweat glands and transported to the skin surface.

It is found in the secreted. Probable pheromone carrier. The chain is Allergen Bos d 2 from Bos taurus (Bovine).